Consider the following 469-residue polypeptide: Argininosuccinate lyase (469 aa).

Belongs to the lyase 1 family. Argininosuccinate lyase subfamily.

The protein localises to the cytoplasm. The enzyme catalyses 2-(N(omega)-L-arginino)succinate = fumarate + L-arginine. It functions in the pathway amino-acid biosynthesis; L-arginine biosynthesis; L-arginine from L-ornithine and carbamoyl phosphate: step 3/3. In Burkholderia lata (strain ATCC 17760 / DSM 23089 / LMG 22485 / NCIMB 9086 / R18194 / 383), this protein is Argininosuccinate lyase.